The chain runs to 53 residues: Large ribosomal subunit protein bL33A (53 aa).

This sequence belongs to the bacterial ribosomal protein bL33 family.

In Mycoplasmoides gallisepticum (strain R(low / passage 15 / clone 2)) (Mycoplasma gallisepticum), this protein is Large ribosomal subunit protein bL33A.